The chain runs to 225 residues: Membrane-spanning 4-domains subfamily A member 4D (225 aa).

At 1–42 the chain is on the cytoplasmic side; sequence MQGLAQTTMAVVPGGAPPSENSVIKSQMWNKNKEKFLKGEPK. The helical transmembrane segment at 43 to 63 threads the bilayer; that stretch reads VLGAIQVMIAFINFSLGIIII. Topologically, residues 64 to 73 are extracellular; that stretch reads LNRVSERFMS. The chain crosses the membrane as a helical span at residues 74 to 94; that stretch reads VLLLAPFWGSIMFIFSGSLSI. The Cytoplasmic portion of the chain corresponds to 95–113; it reads AAGVKPTKAMIISSLSVNT. Residues 114-134 traverse the membrane as a helical segment; sequence ISSVLAVAASIIGVISVISGV. The Extracellular segment spans residues 135-148; that stretch reads FRQFRSQPAIASLD. Residues 149-169 traverse the membrane as a helical segment; it reads VLMTILNMLEFCIAVSVSAFG. Residues 170 to 225 are Cytoplasmic-facing; sequence CKASCCNSSEVLVVLPSNSAVTVTAPPMILQPLPPSECQGKNVPENLYRNQPGEIV.

Belongs to the MS4A family. In terms of tissue distribution, expressed in thymus, spleen, peripheral lymph node, liver, kidney, heart, colon, lung, and testes.

The protein resides in the membrane. Its function is as follows. May be involved in signal transduction as a component of a multimeric receptor complex. The chain is Membrane-spanning 4-domains subfamily A member 4D (Ms4a4d) from Mus musculus (Mouse).